A 522-amino-acid polypeptide reads, in one-letter code: Calcium-dependent protein kinase 4 (522 aa).

A compositionally biased stretch (polar residues) spans 1-10; it reads MGACFSSHTA. The interval 1 to 43 is disordered; sequence MGACFSSHTATAAADGGSGKRQQRKGDHKGKLPDGGGGEKEKE. A lipid anchor (N-myristoyl glycine) is attached at G2. The segment covering 29–43 has biased composition (basic and acidic residues); it reads KGKLPDGGGGEKEKE. In terms of domain architecture, Protein kinase spans 59–319; sequence YQVGRLLGHG…AAQALSHPWV (261 aa). ATP-binding positions include 65 to 73 and K88; that span reads LGHGQFGYT. The Proton acceptor role is filled by D185. Positions 325–355 are autoinhibitory domain; the sequence is ASEIPVDISVLSNMRQFVKYSRFKQFALRAL. EF-hand domains are found at residues 362–397, 399–434, 441–476, and 481–508; these read EELA…DLPW, LKGP…IHQM, RWGL…GLKG, and LLEE…ASMS. Ca(2+) contacts are provided by D375, D377, S379, S381, E386, D412, N414, D416, E423, D454, D456, D458, Y460, E465, D486, D488, D490, R492, and E497.

This sequence belongs to the protein kinase superfamily. Ser/Thr protein kinase family. CDPK subfamily.

The protein resides in the membrane. The enzyme catalyses L-seryl-[protein] + ATP = O-phospho-L-seryl-[protein] + ADP + H(+). It carries out the reaction L-threonyl-[protein] + ATP = O-phospho-L-threonyl-[protein] + ADP + H(+). Activated by calcium. Autophosphorylation may play an important role in the regulation of the kinase activity. In terms of biological role, may play a role in signal transduction pathways that involve calcium as a second messenger. This Oryza sativa subsp. japonica (Rice) protein is Calcium-dependent protein kinase 4.